The primary structure comprises 248 residues: Clathrin light chain A (248 aa).

Residues 1–93 (MAELDPFGAP…YQESNGPTDS (93 aa)) are disordered. The segment covering 13-25 (APGGPALGNGVAG) has biased composition (gly residues). An involved in binding clathrin heavy chain region spans residues 100–162 (VDRLQSEPES…QLQKTKASNR (63 aa)). Residues S105 and S206 each carry the phosphoserine modification. K223 is modified (N6-acetyllysine). A Phosphoserine modification is found at S236. Position 242 is an N6-acetyllysine (K242).

Belongs to the clathrin light chain family. As to quaternary structure, clathrin coats are formed from molecules containing 3 heavy chains and 3 light chains. Interacts with CALY; the interaction stimulates clathrin self-assembly and clathrin-mediated endocytosis. Interacts with CKAP5 and TACC3 forming the TACC3/ch-TOG/clathrin complex located at spindle inter-microtubules bridges; the complex implicates clathrin triskelions.

The protein localises to the cytoplasmic vesicle membrane. It is found in the membrane. It localises to the coated pit. The protein resides in the cytoplasm. Its subcellular location is the cytoskeleton. The protein localises to the spindle. Functionally, clathrin is the major protein of the polyhedral coat of coated pits and vesicles. Acts as a component of the TACC3/ch-TOG/clathrin complex proposed to contribute to stabilization of kinetochore fibers of the mitotic spindle by acting as inter-microtubule bridge. This is Clathrin light chain A (Clta) from Rattus norvegicus (Rat).